The sequence spans 214 residues: Single-pass membrane and coiled-coil domain-containing protein 1 (214 aa).

Positions T5 to T40 form a coiled coil. The helical transmembrane segment at I59–I81 threads the bilayer. The disordered stretch occupies residues K193 to D214.

The protein localises to the membrane. This is Single-pass membrane and coiled-coil domain-containing protein 1 (Smco1) from Mus musculus (Mouse).